We begin with the raw amino-acid sequence, 662 residues long: Pro-neuregulin-1, membrane-bound isoform (662 aa).

Positions 1 to 13 (MSERKEGRGKGKG) are excised as a propeptide. The interval 1-52 (MSERKEGRGKGKGKKKDRGSRGKPGPAEGDPSPALPPRLKEMKSQESAAGSK) is disordered. The Extracellular segment spans residues 14 to 265 (KKKDRGSRGK…SKAEELYQKR (252 aa)). Residues 37 to 128 (PRLKEMKSQE…GNDSASANIT (92 aa)) enclose the Ig-like C2-type domain. Cys-57 and Cys-112 are oxidised to a cystine. Residues Asn-120, Asn-126, and Asn-164 are each glycosylated (N-linked (GlcNAc...) asparagine). An EGF-like domain is found at 178–222 (HLIKCAEKEKTFCVNGGECFTVKDLSNPSRYLCKCPNEFTGDRCQ). Intrachain disulfides connect Cys-182–Cys-196, Cys-190–Cys-210, and Cys-212–Cys-221. Residues 266 to 288 (VLTITGICIALLVVGIMCVVAYC) traverse the membrane as a helical segment. Topologically, residues 289–662 (KTKKQRQKLH…VIANQDPIAV (374 aa)) are cytoplasmic. Residues 358-373 (SHYTSTAHHSTTVTQT) show a composition bias toward low complexity. Disordered regions lie at residues 358-383 (SHYTSTAHHSTTVTQTPSHSWSNGHT), 398-480 (SVEN…PVSS), and 547-610 (YETT…DTPF). Polar residues predominate over residues 374-383 (PSHSWSNGHT). Residues 410-420 (GPRGRLHGLGG) show a composition bias toward gly residues. Residues 425–445 (SFLRHARETPDSYRDSPHSER) show a composition bias toward basic and acidic residues. Over residues 564-574 (TNSRRAKRTKP) the composition is skewed to basic residues. Residues 585–596 (DSNTSSVSSNSE) are compositionally biased toward low complexity.

It belongs to the neuregulin family. In terms of assembly, the cytoplasmic domain interacts with the LIM domain region of LIMK1. Forms a ternary complex with ERBB3 and ITGAV:ITGB3 or ITGA6:ITGB4. Interacts with NRDC and BACE1. Proteolytic cleavage close to the plasma membrane on the external face leads to the release of the soluble growth factor form. Post-translationally, N- and O-glycosylated. Extensive glycosylation precedes the proteolytic cleavage. As to expression, widely expressed. Most tissues contain isoform alpha2A and isoform alpha2B. Isoform Alpha2 and isoform beta2 are the predominant forms in mesenchymal and non-neuronal organs. Isoform Beta1 is enriched in brain and spinal cord, but not in muscle and heart. Isoform Alpha2C is highly expressed in spinal cord, moderately in lung, brain, ovary, and stomach, in low amounts in the kidney, skin and heart and not detected in the liver, spleen, and placenta.

The protein resides in the cell membrane. It localises to the secreted. In terms of biological role, direct ligand for ERBB3 and ERBB4 tyrosine kinase receptors. Concomitantly recruits ERBB1 and ERBB2 coreceptors, resulting in ligand-stimulated tyrosine phosphorylation and activation of the ERBB receptors. The multiple isoforms perform diverse functions such as inducing growth and differentiation of epithelial, glial, neuronal, and skeletal muscle cells; inducing expression of acetylcholine receptor in synaptic vesicles during the formation of the neuromuscular junction; stimulating lobuloalveolar budding and milk production in the mammary gland and inducing differentiation of mammary tumor cells; stimulating Schwann cell proliferation; implication in the development of the myocardium such as trabeculation of the developing heart. Binds to ERBB4 and ERBB3. Acts as a ligand for integrins and binds (via EGF domain) to integrins ITGAV:ITGB3 or ITGA6:ITGB4. Its binding to integrins and subsequent ternary complex formation with integrins and ERRB3 are essential for NRG1-ERBB signaling. Induces the phosphorylation and activation of MAPK3/ERK1, MAPK1/ERK2 and AKT1, and ligand-dependent ERBB4 endocytosis is essential for the NRG1-mediated activation of these kinases in neurons. The chain is Pro-neuregulin-1, membrane-bound isoform (Nrg1) from Rattus norvegicus (Rat).